We begin with the raw amino-acid sequence, 392 residues long: Succinate--CoA ligase [ADP-forming] subunit beta (392 aa).

Residues 9-248 enclose the ATP-grasp domain; the sequence is KGILKQFGVA…ITEEDPLEYE (240 aa). Residues Lys50, 57–59, Glu103, Met106, and Glu111 contribute to the ATP site; that span reads GRG. Mg(2+) contacts are provided by Asn203 and Asp217. Substrate is bound by residues Asn268 and 325–327; that span reads GIV.

It belongs to the succinate/malate CoA ligase beta subunit family. In terms of assembly, heterotetramer of two alpha and two beta subunits. Requires Mg(2+) as cofactor.

It catalyses the reaction succinate + ATP + CoA = succinyl-CoA + ADP + phosphate. It carries out the reaction GTP + succinate + CoA = succinyl-CoA + GDP + phosphate. The protein operates within carbohydrate metabolism; tricarboxylic acid cycle; succinate from succinyl-CoA (ligase route): step 1/1. In terms of biological role, succinyl-CoA synthetase functions in the citric acid cycle (TCA), coupling the hydrolysis of succinyl-CoA to the synthesis of either ATP or GTP and thus represents the only step of substrate-level phosphorylation in the TCA. The beta subunit provides nucleotide specificity of the enzyme and binds the substrate succinate, while the binding sites for coenzyme A and phosphate are found in the alpha subunit. In Chlorobaculum tepidum (strain ATCC 49652 / DSM 12025 / NBRC 103806 / TLS) (Chlorobium tepidum), this protein is Succinate--CoA ligase [ADP-forming] subunit beta.